A 382-amino-acid chain; its full sequence is Alpha-2B adrenergic receptor (382 aa).

A helical membrane pass occupies residues 1-25 (AIAAVITFLILFTIFGNALVILAVL). The Cytoplasmic portion of the chain corresponds to 26–36 (TSRSLRAPQNL). The helical transmembrane segment at 37–62 (FLVSLAAADILVATLIIPFSLANELL) threads the bilayer. The Extracellular portion of the chain corresponds to 63–72 (GYWYFRHTWC). The cysteines at positions 72 and 151 are disulfide-linked. A helical transmembrane segment spans residues 73 to 95 (EVYLALDVLFCTSSIVHLCAISL). Residues 96–117 (DRYWSVSRALEYNSKRTPRRIK) lie on the Cytoplasmic side of the membrane. The chain crosses the membrane as a helical span at residues 118–140 (GIILTVWLIAAFISLPPLIYKGD). Over 141 to 156 (KGKKPGGRPQCKLNEE) the chain is Extracellular. Residues 157–180 (AWYILSSSIGSFFAPCLIMILVYL) form a helical membrane-spanning segment. At 181–346 (RIYLIAKRRN…MNREKRFTFV (166 aa)) the chain is on the cytoplasmic side. Positions 192 to 305 (QGPHGKQAPG…QGTPNFQPSQ (114 aa)) are disordered. The segment covering 271–284 (EEEEEEEEEEEEEC) has biased composition (acidic residues). Over residues 291 to 305 (TSSSLQGTPNFQPSQ) the composition is skewed to polar residues. Residues 347–370 (LAVVIGVFVLCWFPFFFSYSLGAI) traverse the membrane as a helical segment. Residues 371–379 (CPQHCKVPH) lie on the Extracellular side of the membrane. Residues 380–382 (GLF) form a helical membrane-spanning segment.

This sequence belongs to the G-protein coupled receptor 1 family. Adrenergic receptor subfamily. ADRA2B sub-subfamily. As to quaternary structure, interacts with RAB26. Interacts with PPP1R9B. Interacts with GGA1, GGA2 and GGA3.

The protein localises to the cell membrane. In terms of biological role, alpha-2 adrenergic receptors mediate the catecholamine-induced inhibition of adenylate cyclase through the action of G proteins. The polypeptide is Alpha-2B adrenergic receptor (ADRA2B) (Didelphis virginiana (North American opossum)).